Consider the following 24-residue polypeptide: Caerin-2.1 (24 aa).

This sequence belongs to the frog skin active peptide (FSAP) family. Caerin subfamily. As to expression, expressed by the skin dorsal glands.

The protein localises to the secreted. Inhibits the formation of NO by neuronal nitric oxide synthase. The polypeptide is Caerin-2.1 (Litoria rothii (Roth's tree frog)).